Consider the following 598-residue polypeptide: Cytochrome P450 monooxygenase phmB (598 aa).

A helical transmembrane segment spans residues 107–127 (VAAKIAALLFVAGLFWAVSVL). Asparagine 171, asparagine 428, and asparagine 494 each carry an N-linked (GlcNAc...) asparagine glycan. Cysteine 542 serves as a coordination point for heme. N-linked (GlcNAc...) asparagine glycosylation is found at asparagine 549 and asparagine 581.

It belongs to the cytochrome P450 family. Heme serves as cofactor.

Its subcellular location is the membrane. Its pathway is mycotoxin biosynthesis. Functionally, cytochrome P450 monooxygenase; part of the gene cluster that mediates the biosynthesis of the mycotoxins phomacins, leucine-derived cytochalasans with potent actin polymerization-inhibitory activities and monocot-specific antigerminative activities. The first step in the pathway is catalyzed by the hybrid PKS-NRPS phmA, assisted by the enoyl reductase phmE, that are responsible for fusion of the leucine precursor and the polyketide backbone to produce a 2-pyrrolidone intermediate. The polyketide synthase module (PKS) of phmA is responsible for the synthesis of the polyketide backbone and the downstream nonribosomal peptide synthetase (NRPS) amidates the carboxyl end of the polyketide with the leucine precursor. Because phmA lacks a designated enoylreductase (ER) domain, the required activity is provided the enoyl reductase phmE. Reduction by the hydrolyase phmG, followed by dehydration and intra-molecular Diels-Alder cyclization by the Diels-Alderase phmD then yield the required isoindolone-fused macrocycle. A number of oxidative steps catalyzed by the tailoring cytochrome P450 monooxygenase phmB, the FAD-linked oxidoreductase phmC and the short-chain dehydrogenase/reductase phmF, are further required to afford the final products, phomacin D and phomacin E. The chain is Cytochrome P450 monooxygenase phmB from Phaeosphaeria nodorum (strain SN15 / ATCC MYA-4574 / FGSC 10173) (Glume blotch fungus).